The following is a 601-amino-acid chain: Elongation factor 4 (601 aa).

The tr-type G domain occupies 6–188; the sequence is QCIRNFSIIA…AVVAKVPPPQ (183 aa). GTP is bound by residues 18–23 and 135–138; these read DHGKST and NKID.

This sequence belongs to the TRAFAC class translation factor GTPase superfamily. Classic translation factor GTPase family. LepA subfamily.

Its subcellular location is the cell membrane. The catalysed reaction is GTP + H2O = GDP + phosphate + H(+). Its function is as follows. Required for accurate and efficient protein synthesis under certain stress conditions. May act as a fidelity factor of the translation reaction, by catalyzing a one-codon backward translocation of tRNAs on improperly translocated ribosomes. Back-translocation proceeds from a post-translocation (POST) complex to a pre-translocation (PRE) complex, thus giving elongation factor G a second chance to translocate the tRNAs correctly. Binds to ribosomes in a GTP-dependent manner. The sequence is that of Elongation factor 4 from Desulfitobacterium hafniense (strain DSM 10664 / DCB-2).